The sequence spans 192 residues: Acetyltransferase PA3944 (192 aa).

In terms of domain architecture, N-acetyltransferase spans 18-187 (LLLRAWRDSD…RHILYRVDAA (170 aa)). Residues 105–107 (WRL), G113, N145, and 150–152 (GLM) contribute to the CoA site.

Catalyzes the transfer of an acetyl group from acetyl coenzyme A (AcCoA) to an acceptor substrate and releases both CoA and the acetylated product. It prefers the peptide Asp-Phe methyl ester (or aspartame) and the peptide antibiotics polymyxin B and colistin. Other substrates like dopamine, serotonin, puromycin, chloramphenicol, D-glucosamine, glycine and N-alpha-acetyl-L-glutamine are used and displayed lower activity. This Pseudomonas aeruginosa (strain ATCC 15692 / DSM 22644 / CIP 104116 / JCM 14847 / LMG 12228 / 1C / PRS 101 / PAO1) protein is Acetyltransferase PA3944.